A 768-amino-acid polypeptide reads, in one-letter code: Glucoamylase S2 (768 aa).

Positions 1–21 (MQRPFLLAYLVLSLLFNSALG) are cleaved as a signal peptide. 2 disordered regions span residues 29–83 (RGSS…ETTI) and 125–149 (TTTV…PTTP). The segment covering 30–48 (GSSSSNITSSGPSSTPFSS) has biased composition (low complexity). Asparagine 35 is a glycosylation site (N-linked (GlcNAc...) asparagine). Positions 49 to 66 (ATESFSTGTTVTPSSSKY) are enriched in polar residues. 2 stretches are compositionally biased toward low complexity: residues 71–83 (TETS…ETTI) and 131–149 (STSP…PTTP). Residues asparagine 309, asparagine 323, asparagine 415, asparagine 424, and asparagine 435 are each glycosylated (N-linked (GlcNAc...) asparagine). Residues 349-692 (VSIERIFENI…ASTTLYQLIY (344 aa)) form a h subunit region. Tryptophan 456 serves as a coordination point for substrate. The N-linked (GlcNAc...) asparagine glycan is linked to asparagine 514. Aspartate 519 acts as the Proton acceptor in catalysis. Glutamate 522 (proton donor) is an active-site residue. Asparagine 547, asparagine 646, asparagine 651, asparagine 721, and asparagine 742 each carry an N-linked (GlcNAc...) asparagine glycan. A y subunit region spans residues 693–768 (RHISEQHDLV…LKATWEQTGN (76 aa)).

The protein belongs to the glycosyl hydrolase 15 family.

The catalysed reaction is Hydrolysis of terminal (1-&gt;4)-linked alpha-D-glucose residues successively from non-reducing ends of the chains with release of beta-D-glucose.. This Saccharomyces cerevisiae (Baker's yeast) protein is Glucoamylase S2 (STA2).